Consider the following 440-residue polypeptide: Xylose isomerase (440 aa).

Residues histidine 101 and aspartate 104 contribute to the active site. 7 residues coordinate Mg(2+): glutamate 232, glutamate 268, histidine 271, aspartate 296, aspartate 307, aspartate 309, and aspartate 339.

It belongs to the xylose isomerase family. In terms of assembly, homotetramer. Requires Mg(2+) as cofactor.

The protein localises to the cytoplasm. The catalysed reaction is alpha-D-xylose = alpha-D-xylulofuranose. The polypeptide is Xylose isomerase (Salmonella dublin (strain CT_02021853)).